Reading from the N-terminus, the 62-residue chain is Large ribosomal subunit protein eL24 (62 aa).

Cys6, Cys9, Cys32, and Cys36 together coordinate Zn(2+). The C4-type zinc-finger motif lies at 6–36 (CSFCEGTIEPGCGKKYVKKDGSVMHFCSSKC).

It belongs to the eukaryotic ribosomal protein eL24 family. Part of the 50S ribosomal subunit. Forms a cluster with proteins L3 and L14. Zn(2+) is required as a cofactor.

Functionally, binds to the 23S rRNA. The polypeptide is Large ribosomal subunit protein eL24 (Methanococcus maripaludis (strain C7 / ATCC BAA-1331)).